A 175-amino-acid chain; its full sequence is Large ribosomal subunit protein uL10 (175 aa).

Belongs to the universal ribosomal protein uL10 family. As to quaternary structure, part of the ribosomal stalk of the 50S ribosomal subunit. The N-terminus interacts with L11 and the large rRNA to form the base of the stalk. The C-terminus forms an elongated spine to which L12 dimers bind in a sequential fashion forming a multimeric L10(L12)X complex.

Its function is as follows. Forms part of the ribosomal stalk, playing a central role in the interaction of the ribosome with GTP-bound translation factors. This is Large ribosomal subunit protein uL10 from Synechococcus sp. (strain WH7803).